We begin with the raw amino-acid sequence, 156 residues long: ATP synthase subunit b (156 aa).

Residues 12-32 (LAFAIFVWFCMKLVWPPITAA) traverse the membrane as a helical segment.

Belongs to the ATPase B chain family. As to quaternary structure, F-type ATPases have 2 components, F(1) - the catalytic core - and F(0) - the membrane proton channel. F(1) has five subunits: alpha(3), beta(3), gamma(1), delta(1), epsilon(1). F(0) has three main subunits: a(1), b(2) and c(10-14). The alpha and beta chains form an alternating ring which encloses part of the gamma chain. F(1) is attached to F(0) by a central stalk formed by the gamma and epsilon chains, while a peripheral stalk is formed by the delta and b chains.

It localises to the cell inner membrane. In terms of biological role, f(1)F(0) ATP synthase produces ATP from ADP in the presence of a proton or sodium gradient. F-type ATPases consist of two structural domains, F(1) containing the extramembraneous catalytic core and F(0) containing the membrane proton channel, linked together by a central stalk and a peripheral stalk. During catalysis, ATP synthesis in the catalytic domain of F(1) is coupled via a rotary mechanism of the central stalk subunits to proton translocation. Functionally, component of the F(0) channel, it forms part of the peripheral stalk, linking F(1) to F(0). This is ATP synthase subunit b from Stutzerimonas stutzeri (strain A1501) (Pseudomonas stutzeri).